The sequence spans 226 residues: MQLSIQPQSEAELLAKANWLAGFTLGELAQQLNTVVPPDLTRDKGWVGQIIERALGATAGSKPEQDFAHLGIELKTIPINNHGLPLETTFICLAPLIHNQGITWQTSHVKYKLQRVLWIPIQAERSIPIKDRYIGRAILWSPSYQQEQQLRNDWEELMEYIVLGRLDQINGHLGEVMQLRPKGRNRLSITQSIDQHGEQIQSLPLAFYLRKPFTAAILQNFLQQSD.

This sequence belongs to the MutH family.

Its subcellular location is the cytoplasm. Its function is as follows. Sequence-specific endonuclease that cleaves unmethylated GATC sequences. It is involved in DNA mismatch repair. The polypeptide is DNA mismatch repair protein MutH (Haemophilus ducreyi (strain 35000HP / ATCC 700724)).